Consider the following 495-residue polypeptide: UDP-N-acetylmuramoyl-L-alanyl-D-glutamate--2,6-diaminopimelate ligase (495 aa).

Serine 29 contributes to the UDP-N-acetyl-alpha-D-muramoyl-L-alanyl-D-glutamate binding site. 111-117 (GTNGKTS) lines the ATP pocket. UDP-N-acetyl-alpha-D-muramoyl-L-alanyl-D-glutamate is bound by residues 153–154 (TT), serine 180, glutamine 186, and arginine 188. The residue at position 220 (lysine 220) is an N6-carboxylysine. Meso-2,6-diaminopimelate-binding positions include arginine 384, 408 to 411 (DNPR), glycine 459, and glutamate 463. Positions 408 to 411 (DNPR) match the Meso-diaminopimelate recognition motif motif.

The protein belongs to the MurCDEF family. MurE subfamily. Mg(2+) serves as cofactor. Post-translationally, carboxylation is probably crucial for Mg(2+) binding and, consequently, for the gamma-phosphate positioning of ATP.

It is found in the cytoplasm. The enzyme catalyses UDP-N-acetyl-alpha-D-muramoyl-L-alanyl-D-glutamate + meso-2,6-diaminopimelate + ATP = UDP-N-acetyl-alpha-D-muramoyl-L-alanyl-gamma-D-glutamyl-meso-2,6-diaminopimelate + ADP + phosphate + H(+). It functions in the pathway cell wall biogenesis; peptidoglycan biosynthesis. In terms of biological role, catalyzes the addition of meso-diaminopimelic acid to the nucleotide precursor UDP-N-acetylmuramoyl-L-alanyl-D-glutamate (UMAG) in the biosynthesis of bacterial cell-wall peptidoglycan. The polypeptide is UDP-N-acetylmuramoyl-L-alanyl-D-glutamate--2,6-diaminopimelate ligase (Xanthomonas oryzae pv. oryzae (strain MAFF 311018)).